We begin with the raw amino-acid sequence, 806 residues long: Cell cycle progression protein 1 (806 aa).

Residues 1 to 216 are Cytoplasmic-facing; that stretch reads MSENSSDSDS…KRQFSSGLNK (216 aa). The tract at residues 1-307 is interaction with MCF2L and SRC; that stretch reads MSENSSDSDS…QKTNLATENQ (307 aa). Disordered stretches follow at residues 80-105 and 152-207; these read SSTI…DDSD and VFSS…KESK. Residues 175 to 184 show a composition bias toward basic residues; that stretch reads FRRRRARKKT. S186 carries the post-translational modification Phosphoserine. The segment covering 190–207 has biased composition (basic and acidic residues); that stretch reads SEDRLVAEQETEPSKESK. The helical; Signal-anchor for type II membrane protein transmembrane segment at 217–237 threads the bilayer; the sequence is CVILALVIAVSMGFGHFYGTI. Residues 238-806 lie on the Lumenal side of the membrane; that stretch reads QIQKRQQLVR…LGQLPFDPQY (569 aa). A coiled-coil region spans residues 305–449; sequence ENQYLRVSLE…EQQRSDLWER (145 aa). Over residues 457 to 467 the composition is skewed to basic and acidic residues; it reads QSGKQETDGKK. Positions 457 to 478 are disordered; the sequence is QSGKQETDGKKKVGRGNHRAKN. The segment covering 468–478 has biased composition (basic residues); it reads KVGRGNHRAKN. Residues 503–529 are a coiled coil; it reads VRHHKEKIKQAKEAVKENLKKFSDSVK. The interval 758 to 778 is disordered; the sequence is SRHRKQEQKHLQPQPYKREGK.

The protein belongs to the CCPG1 family. Interacts with MCF2L. May interact with MCF2, ARHGEF1, BCR, VAV1 and FGD1, but not with TIAM1. Interacts with GTP-bound CDC42 and SRC.

It localises to the cytoplasmic granule membrane. Acts as an assembly platform for Rho protein signaling complexes. Limits guanine nucleotide exchange activity of MCF2L toward RHOA, which results in an inhibition of both its transcriptional activation ability and its transforming activity. Does not inhibit activity of MCF2L toward CDC42, or activity of MCF2 toward either RHOA or CDC42. May be involved in cell cycle regulation. The polypeptide is Cell cycle progression protein 1 (CCPG1) (Pongo abelii (Sumatran orangutan)).